The primary structure comprises 187 residues: UPF0301 protein CKO_04323 (187 aa).

It belongs to the UPF0301 (AlgH) family.

The chain is UPF0301 protein CKO_04323 from Citrobacter koseri (strain ATCC BAA-895 / CDC 4225-83 / SGSC4696).